A 143-amino-acid chain; its full sequence is Large ribosomal subunit protein uL15 (143 aa).

The tract at residues 1 to 52 (MKLNTLAPAAGSKSAPKRLGRGIGSGLGKTSGKGHKGQKARSGGYHKVGFEG) is disordered. Residues 21 to 31 (RGIGSGLGKTS) show a composition bias toward gly residues.

The protein belongs to the universal ribosomal protein uL15 family. In terms of assembly, part of the 50S ribosomal subunit.

Functionally, binds to the 23S rRNA. The sequence is that of Large ribosomal subunit protein uL15 from Francisella tularensis subsp. tularensis (strain FSC 198).